We begin with the raw amino-acid sequence, 905 residues long: Patched domain-containing protein 3 (905 aa).

A disordered region spans residues 1–67 (MISSKVAPGE…PVGQEAPPPR (67 aa)). The helical transmembrane segment at 94 to 114 (WLFLLGPVLLTASLGTGLIFL) threads the bilayer. N-linked (GlcNAc...) asparagine glycosylation is found at N146, N199, N229, and N233. 6 helical membrane-spanning segments follow: residues 337-357 (TVIP…VVSC), 369-389 (VAVF…GLML), 391-411 (IGVP…GVGV), 441-461 (VAVS…TGIT), 475-495 (GTTL…IMAL), and 558-578 (FIVV…CFQV). The region spanning 338–495 (VIPLFHLAYI…ITCFGAIMAL (158 aa)) is the SSD domain. Residues N647, N661, and N692 are each glycosylated (N-linked (GlcNAc...) asparagine). The next 5 helical transmembrane spans lie at 759–779 (VMIA…HPVC), 781–801 (LWVT…MAFW), 813–833 (LVIC…AFVS), 849–869 (LLGY…CVLA), and 882–902 (IMFL…PVFL).

This sequence belongs to the patched family. Expressed in germ cells of the testis (at protein level).

It is found in the cell projection. Its subcellular location is the cilium. It localises to the flagellum membrane. The protein localises to the endoplasmic reticulum membrane. In terms of biological role, may play a role in sperm development or sperm function. However, does not appear to have an essential role in spermatogenesis or male fertility. The protein is Patched domain-containing protein 3 of Rattus norvegicus (Rat).